The sequence spans 102 residues: Large ribosomal subunit protein bL21 (102 aa).

The protein belongs to the bacterial ribosomal protein bL21 family. As to quaternary structure, part of the 50S ribosomal subunit. Contacts protein L20.

This protein binds to 23S rRNA in the presence of protein L20. This is Large ribosomal subunit protein bL21 from Onion yellows phytoplasma (strain OY-M).